Consider the following 119-residue polypeptide: MPRVKRGVTARARHKKVLALAKGFRGRRGNVFRIAKQAVMKAGQYAYRDRRTKKRVFRQLWIARINAAARELGLTYSQFANGLKKASIEVDRKMLADLAVHDKAAFGSIVEQVKAKLAA.

Belongs to the bacterial ribosomal protein bL20 family.

Functionally, binds directly to 23S ribosomal RNA and is necessary for the in vitro assembly process of the 50S ribosomal subunit. It is not involved in the protein synthesizing functions of that subunit. In Acidovorax ebreus (strain TPSY) (Diaphorobacter sp. (strain TPSY)), this protein is Large ribosomal subunit protein bL20.